We begin with the raw amino-acid sequence, 474 residues long: 4-O-methyl-glucuronoyl methylesterase (474 aa).

The N-terminal stretch at 1 to 17 (MFKPSFVALALVSYATA) is a signal peptide. Positions 19-55 (ASAPQWGQCGGIGWTGPTACPSGWACQQLNAYYSQCL) constitute a CBM1 domain. The interval 61–91 (APARTTAAPPPPPATTAAPPPPTTSAPTGSS) is disordered. Pro residues predominate over residues 68-84 (APPPPPATTAAPPPPTT). The N-linked (GlcNAc...) asparagine glycan is linked to Asn120. The GXSYXG catalytic site motif motif lies at 284–289 (GCSRDG). 2 cysteine pairs are disulfide-bonded: Cys285–Cys421 and Cys317–Cys393. The Nucleophile role is filled by Ser286. Substrate contacts are provided by Lys290, Gln332, Glu340, and Trp384. His420 serves as the catalytic Proton donor/acceptor.

This sequence belongs to the carbohydrate esterase 15 (CE15) family. N-glycosylated.

Its subcellular location is the secreted. It carries out the reaction a 4-O-methyl-alpha-D-glucuronosyl ester derivative + H2O = 4-O-methyl-alpha-D-glucuronate derivative + an alcohol + H(+). In terms of biological role, glucuronoyl esterase which may play a significant role in biomass degradation, as it is considered to disconnect hemicellulose from lignin through the hydrolysis of the ester bond between 4-O-methyl-D-glucuronic acid residues of glucuronoxylans and aromatic alcohols of lignin. In Cerrena unicolor (Canker rot fungus), this protein is 4-O-methyl-glucuronoyl methylesterase.